Here is a 311-residue protein sequence, read N- to C-terminus: 4-hydroxy-tetrahydrodipicolinate synthase (311 aa).

Position 51 (threonine 51) interacts with pyruvate. The Proton donor/acceptor role is filled by tyrosine 140. The Schiff-base intermediate with substrate role is filled by lysine 168. Residue isoleucine 209 participates in pyruvate binding.

Belongs to the DapA family. Homotetramer; dimer of dimers.

It localises to the cytoplasm. The catalysed reaction is L-aspartate 4-semialdehyde + pyruvate = (2S,4S)-4-hydroxy-2,3,4,5-tetrahydrodipicolinate + H2O + H(+). The protein operates within amino-acid biosynthesis; L-lysine biosynthesis via DAP pathway; (S)-tetrahydrodipicolinate from L-aspartate: step 3/4. Catalyzes the condensation of (S)-aspartate-beta-semialdehyde [(S)-ASA] and pyruvate to 4-hydroxy-tetrahydrodipicolinate (HTPA). This is 4-hydroxy-tetrahydrodipicolinate synthase from Streptococcus pneumoniae (strain Hungary19A-6).